Consider the following 508-residue polypeptide: Steroid 17-alpha-hydroxylase/17,20 lyase (508 aa).

Cys442 contacts heme.

It belongs to the cytochrome P450 family. The cofactor is heme.

It is found in the endoplasmic reticulum membrane. Its subcellular location is the microsome membrane. The enzyme catalyses a C21-steroid + reduced [NADPH--hemoprotein reductase] + O2 = a 17alpha-hydroxy-C21-steroid + oxidized [NADPH--hemoprotein reductase] + H2O + H(+). It catalyses the reaction progesterone + reduced [NADPH--hemoprotein reductase] + O2 = 17alpha-hydroxyprogesterone + oxidized [NADPH--hemoprotein reductase] + H2O + H(+). It carries out the reaction pregnenolone + reduced [NADPH--hemoprotein reductase] + O2 = 17alpha-hydroxypregnenolone + oxidized [NADPH--hemoprotein reductase] + H2O + H(+). The catalysed reaction is 17alpha-hydroxyprogesterone + reduced [NADPH--hemoprotein reductase] + O2 = androst-4-ene-3,17-dione + acetate + oxidized [NADPH--hemoprotein reductase] + H2O + 2 H(+). The enzyme catalyses 17alpha-hydroxyprogesterone + reduced [NADPH--hemoprotein reductase] + O2 = 16alpha,17alpha-dihydroxyprogesterone + oxidized [NADPH--hemoprotein reductase] + H2O + H(+). It catalyses the reaction 16alpha,17alpha-dihydroxyprogesterone + reduced [NADPH--hemoprotein reductase] + O2 = 6beta,16alpha,17alpha-trihydroxyprogesterone + oxidized [NADPH--hemoprotein reductase] + H2O + H(+). It carries out the reaction 17alpha-hydroxypregnenolone + reduced [NADPH--hemoprotein reductase] + O2 = 3beta-hydroxyandrost-5-en-17-one + acetate + oxidized [NADPH--hemoprotein reductase] + H2O + 2 H(+). The catalysed reaction is 16alpha,17alpha-dihydroxypregnenolone + reduced [NADPH--hemoprotein reductase] + O2 = 3beta,16alpha-dihydroxy-androst-5-en-17-one + acetate + oxidized [NADPH--hemoprotein reductase] + H2O + 2 H(+). The enzyme catalyses 3beta-hydroxyandrost-5-en-17-one + reduced [NADPH--hemoprotein reductase] + O2 = 3beta,16alpha-dihydroxy-androst-5-en-17-one + oxidized [NADPH--hemoprotein reductase] + H2O + H(+). It catalyses the reaction androst-4-ene-3,17-dione + reduced [NADPH--hemoprotein reductase] + O2 = 16alpha-hydroxyandrost-4-ene-3,17-dione + oxidized [NADPH--hemoprotein reductase] + H2O + H(+). It functions in the pathway steroid hormone biosynthesis. It participates in steroid biosynthesis; glucocorticoid biosynthesis. Its activity is regulated as follows. Regulated predominantly by intracellular cAMP levels. The 17,20-lyase activity is stimulated by cytochrome b5, which acts as an allosteric effector increasing the Vmax of the lyase activity. In terms of biological role, a cytochrome P450 monooxygenase involved in corticoid and androgen biosynthesis. Catalyzes 17-alpha hydroxylation of C21 steroids, which is common for both pathways. A second oxidative step, required only for androgen synthesis, involves an acyl-carbon cleavage. The 17-alpha hydroxy intermediates, as part of adrenal glucocorticoids biosynthesis pathway, are precursors of cortisol. Hydroxylates steroid hormones, pregnenolone and progesterone to form 17-alpha hydroxy metabolites, followed by the cleavage of the C17-C20 bond to form C19 steroids, dehydroepiandrosterone (DHEA) and androstenedione. Has 16-alpha hydroxylase activity. Catalyzes 16-alpha hydroxylation of 17-alpha hydroxy pregnenolone, followed by the cleavage of the C17-C20 bond to form 16-alpha-hydroxy DHEA. Also 16-alpha hydroxylates androgens, relevant for estriol synthesis. Mechanistically, uses molecular oxygen inserting one oxygen atom into a substrate, and reducing the second into a water molecule, with two electrons provided by NADPH via cytochrome P450 reductase (CPR; NADPH-ferrihemoprotein reductase). The chain is Steroid 17-alpha-hydroxylase/17,20 lyase (CYP17A1) from Equus caballus (Horse).